A 356-amino-acid chain; its full sequence is Uroporphyrinogen decarboxylase (356 aa).

Substrate contacts are provided by residues 27-31 (RQAGR), Asp-77, Tyr-154, Thr-209, and His-327.

This sequence belongs to the uroporphyrinogen decarboxylase family. As to quaternary structure, homodimer.

It localises to the cytoplasm. The catalysed reaction is uroporphyrinogen III + 4 H(+) = coproporphyrinogen III + 4 CO2. The protein operates within porphyrin-containing compound metabolism; protoporphyrin-IX biosynthesis; coproporphyrinogen-III from 5-aminolevulinate: step 4/4. Its function is as follows. Catalyzes the decarboxylation of four acetate groups of uroporphyrinogen-III to yield coproporphyrinogen-III. This is Uroporphyrinogen decarboxylase from Hahella chejuensis (strain KCTC 2396).